The chain runs to 719 residues: Translation initiation factor IF-2 (719 aa).

Over residues 54 to 67 the composition is skewed to basic and acidic residues; it reads NKEETKPNVDEKPP. 2 disordered regions span residues 54–75 and 97–122; these read NKEE…LTDN and STKN…KRKN. Residues 109 to 122 show a composition bias toward basic residues; sequence KDKKKKNKKDKRKN. The region spanning 221–390 is the tr-type G domain; the sequence is HRSPVVTVMG…LLVSEMSELK (170 aa). Positions 230-237 are G1; that stretch reads GHVDHGKT. GTP is bound at residue 230–237; that stretch reads GHVDHGKT. The segment at 255–259 is G2; sequence GITQH. Residues 276 to 279 are G3; that stretch reads DTPG. GTP-binding positions include 276 to 280 and 330 to 333; these read DTPGH and NKMD. The tract at residues 330 to 333 is G4; it reads NKMD. A G5 region spans residues 366–368; sequence SAR.

Belongs to the TRAFAC class translation factor GTPase superfamily. Classic translation factor GTPase family. IF-2 subfamily.

It localises to the cytoplasm. One of the essential components for the initiation of protein synthesis. Protects formylmethionyl-tRNA from spontaneous hydrolysis and promotes its binding to the 30S ribosomal subunits. Also involved in the hydrolysis of GTP during the formation of the 70S ribosomal complex. In Alkaliphilus oremlandii (strain OhILAs) (Clostridium oremlandii (strain OhILAs)), this protein is Translation initiation factor IF-2.